The following is a 452-amino-acid chain: Probable ECA polymerase (452 aa).

The next 11 membrane-spanning stretches (helical) occupy residues 6-26 (FSGL…LTWF), 37-57 (VFFS…TSVL), 63-83 (VGVA…CFYG), 118-138 (VILM…NGFL), 155-175 (GVAL…VYFL), 181-201 (AWLF…MIVG), 207-227 (IIIA…ISLW), 228-248 (MLAA…LKRY), 341-361 (LVVM…GMII), 378-398 (YKAA…IVLA), and 410-430 (VFFL…FWLF).

The protein belongs to the WzyE family. Probably part of a complex composed of WzxE, WzyE and WzzE.

The protein resides in the cell inner membrane. It participates in bacterial outer membrane biogenesis; enterobacterial common antigen biosynthesis. Functionally, probably involved in the polymerization of enterobacterial common antigen (ECA) trisaccharide repeat units. The chain is Probable ECA polymerase from Salmonella newport (strain SL254).